Here is a 384-residue protein sequence, read N- to C-terminus: Guanine nucleotide-binding protein alpha-1 subunit (384 aa).

G2 carries the N-myristoyl glycine lipid modification. The S-palmitoyl cysteine moiety is linked to residue C5. The G-alpha domain occupies 38-384 (HIRKLLLLGA…RRNLFEAGLL (347 aa)). The interval 41-54 (KLLLLGAGESGKST) is G1 motif. Residues E49, S50, G51, K52, S53, T54, D163, L188, T194, G222, N288, K289, D291, and A356 each contribute to the GTP site. S53 lines the Mg(2+) pocket. The G2 motif stretch occupies residues 186 to 194 (DVLLARVRT). T194 contacts Mg(2+). Residues 215 to 224 (YRLFDVGGQR) are G3 motif. The segment at 284–291 (MLFLNKFD) is G4 motif. Positions 354–359 (TTALDQ) are G5 motif.

This sequence belongs to the G-alpha family. In terms of assembly, g proteins are composed of 3 units; alpha, beta and gamma. The alpha chain contains the guanine nucleotide binding site. Mg(2+) is required as a cofactor.

In terms of biological role, guanine nucleotide-binding proteins (G proteins) are involved as modulators or transducers in various transmembrane signaling systems. The protein is Guanine nucleotide-binding protein alpha-1 subunit (GPA1) of Pisum sativum (Garden pea).